The chain runs to 866 residues: Probable outer membrane usher protein ElfC (866 aa).

An N-terminal signal peptide occupies residues 1–35 (MYRTHRQHSLLSSGGVPSFIGGLVVFVSAAFNAQA).

It belongs to the fimbrial export usher family.

The protein resides in the cell outer membrane. Part of the elfADCG fimbrial operon, which could be required for adherence to host epithelial cells. Could be involved in the export and assembly of the ElfA fimbrial subunits across the outer membrane. In Escherichia coli O157:H7, this protein is Probable outer membrane usher protein ElfC (elfC).